Consider the following 380-residue polypeptide: Phthiodiolone/phenolphthiodiolone dimycocerosates ketoreductase (380 aa).

It belongs to the mer family. Phthiodiolone/phenolphthiodiolone dimycocerosates ketoreductase subfamily.

Its function is as follows. Catalyzes the reduction of the keto moiety of phthiodiolone dimycocerosates (DIM B) and glycosylated phenolphthiodiolone dimycocerosates to form the intermediate compounds phthiotriol and glycosylated phenolphthiotriol dimycocerosates during phthiocerol dimycocerosates (DIM A) and glycosylated phenolphthiocerol dimycocerosates (PGL) biosynthesis. The sequence is that of Phthiodiolone/phenolphthiodiolone dimycocerosates ketoreductase from Mycobacterium sp. (strain JLS).